The primary structure comprises 108 residues: Thiosulfate sulfurtransferase GlpE (108 aa).

The 89-residue stretch at histidine 17 to alanine 105 folds into the Rhodanese domain. Cysteine 65 functions as the Cysteine persulfide intermediate in the catalytic mechanism.

It belongs to the GlpE family.

It is found in the cytoplasm. It carries out the reaction thiosulfate + hydrogen cyanide = thiocyanate + sulfite + 2 H(+). The catalysed reaction is thiosulfate + [thioredoxin]-dithiol = [thioredoxin]-disulfide + hydrogen sulfide + sulfite + 2 H(+). Its function is as follows. Transferase that catalyzes the transfer of sulfur from thiosulfate to thiophilic acceptors such as cyanide or dithiols. May function in a CysM-independent thiosulfate assimilation pathway by catalyzing the conversion of thiosulfate to sulfite, which can then be used for L-cysteine biosynthesis. The polypeptide is Thiosulfate sulfurtransferase GlpE (Salmonella choleraesuis (strain SC-B67)).